Here is a 98-residue protein sequence, read N- to C-terminus: NADH-ubiquinone oxidoreductase chain 4L (98 aa).

3 consecutive transmembrane segments (helical) span residues 1–21, 29–49, and 61–81; these read MSLI…GLLM, ALLC…LTIL, and IILL…LVMI.

It belongs to the complex I subunit 4L family. Core subunit of respiratory chain NADH dehydrogenase (Complex I) which is composed of 45 different subunits.

It is found in the mitochondrion inner membrane. It carries out the reaction a ubiquinone + NADH + 5 H(+)(in) = a ubiquinol + NAD(+) + 4 H(+)(out). Core subunit of the mitochondrial membrane respiratory chain NADH dehydrogenase (Complex I) which catalyzes electron transfer from NADH through the respiratory chain, using ubiquinone as an electron acceptor. Part of the enzyme membrane arm which is embedded in the lipid bilayer and involved in proton translocation. In Berardius bairdii (Baird's beaked whale), this protein is NADH-ubiquinone oxidoreductase chain 4L (MT-ND4L).